The following is a 302-amino-acid chain: Alpha-ketoglutarate-dependent dioxygenase alkB homolog 4 (302 aa).

Alanine 2 carries the post-translational modification N-acetylalanine. Threonine 8 carries the post-translational modification Phosphothreonine. The Fe2OG dioxygenase domain maps to 150–274; that stretch reads PVEQCNLDYC…RVCVTFRELS (125 aa). 3 residues coordinate Fe cation: histidine 169, aspartate 171, and histidine 254. Residue arginine 265 coordinates 2-oxoglutarate.

This sequence belongs to the alkB family. In terms of assembly, interacts with ZFHX3, MLLT3, MLLT1, HSF4, EP300, TES, EIF3C, MTMR6 and PSMA6. The cofactor is Fe(2+). As to expression, widely expressed, with highest expression in pancreas, ovary and spleen.

The protein localises to the cytoplasm. It localises to the nucleus. Its subcellular location is the nucleolus. It is found in the midbody. The enzyme catalyses an N(6)-methyl-2'-deoxyadenosine in DNA + 2-oxoglutarate + O2 = a 2'-deoxyadenosine in DNA + formaldehyde + succinate + CO2. It carries out the reaction N(6)-methyl-L-lysyl-[protein] + 2-oxoglutarate + O2 = L-lysyl-[protein] + formaldehyde + succinate + CO2. In terms of biological role, dioxygenase that mediates demethylation of actin monomethylated at 'Lys-84' (K84me1), thereby acting as a regulator of actomyosin-processes. Demethylation of actin K84me1 is required for maintaining actomyosin dynamics supporting normal cleavage furrow ingression during cytokinesis and cell migration. In addition to proteins, also demethylates DNA: specifically demethylates DNA methylated on the 6th position of adenine (N(6)-methyladenosine) DNA, thereby regulating Polycomb silencing. The protein is Alpha-ketoglutarate-dependent dioxygenase alkB homolog 4 of Homo sapiens (Human).